Consider the following 28-residue polypeptide: Antibacterial protein LC3 (28 aa).

Its function is as follows. Antibacterial activity against X.campestris, especially strain G, and P.solacearum PO1. The chain is Antibacterial protein LC3 from Bacillus subtilis.